The chain runs to 523 residues: Asc-type amino acid transporter 1 (523 aa).

Positions 1 to 28 (MAGHTQQPSGRGNPRPAPSPSPVPGTVP) are disordered. Positions 15 to 25 (RPAPSPSPVPG) are enriched in pro residues. The next 9 membrane-spanning stretches (helical) occupy residues 40-60 (IGLLSACTIIIGNIIGSGIFI), 72-92 (VGLALFVWVLGGGVTALGSLC), 113-133 (IFGGLAGFLLLWSAVLIMYPT), 268-288 (AIFISIPLVTFVYTFTNIAYF), 310-330 (LLGYFSWVMPVSVALSTFGGI), 362-382 (CTPIPALLVCCGATAVIMLVG), 388-408 (INYVSFINYLCYGVTILGLLL), 424-444 (LLIPVAYLVFWAFLLVFSFIS), and 448-468 (VCGVGVIIILTGVPIFFLGVF). The interval 499–523 (APEEEENGPCPPSLLPATDKPSKPQ) is disordered.

This sequence belongs to the amino acid-polyamine-organocation (APC) superfamily. Disulfide-linked heterodimer with the amino acid transport protein SLC3A2/4F2hc. In terms of tissue distribution, expressed in brain, heart, kidney, liver, lung, pancreas, placenta, and skeletal muscle.

The protein localises to the cell membrane. The catalysed reaction is L-alanine(in) + glycine(out) = L-alanine(out) + glycine(in). The enzyme catalyses L-serine(out) + L-alanine(in) = L-serine(in) + L-alanine(out). It catalyses the reaction L-threonine(out) + L-alanine(in) = L-threonine(in) + L-alanine(out). It carries out the reaction L-cysteine(out) + L-alanine(in) = L-cysteine(in) + L-alanine(out). The catalysed reaction is 2-aminoisobutanoate(out) + L-alanine(in) = 2-aminoisobutanoate(in) + L-alanine(out). The enzyme catalyses D-serine(out) + L-alanine(in) = D-serine(in) + L-alanine(out). It catalyses the reaction D-alanine(out) + L-alanine(in) = D-alanine(in) + L-alanine(out). It carries out the reaction L-valine(out) + L-alanine(in) = L-valine(in) + L-alanine(out). The catalysed reaction is L-methionine(out) + L-alanine(in) = L-methionine(in) + L-alanine(out). The enzyme catalyses beta-alanine(out) + L-alanine(in) = beta-alanine(in) + L-alanine(out). It catalyses the reaction D-cysteine(out) + L-alanine(in) = D-cysteine(in) + L-alanine(out). It carries out the reaction D-threonine(out) + L-alanine(in) = D-threonine(in) + L-alanine(out). The catalysed reaction is D-isoleucine(out) + D-serine(in) = D-isoleucine(in) + D-serine(out). The enzyme catalyses D-serine(in) = D-serine(out). Functionally, associates with SLC3A2/4F2hc to form a functional heterodimeric complex that translocates small neutral L- and D-amino acids across the plasma membrane. Preferentially mediates exchange transport, but can also operate via facilitated diffusion. Acts as a major transporter for glycine, L- and D-serine in the central nervous system. At the spinal cord and brainstem regulates glycine metabolism and glycinergic inhibitory neurotransmission by providing for glycine de novo synthesis from L-serine and glycine recycling from astrocytes to glycinergic motor neurons. At Schaffer collateral-CA1 synapses mediates D-serine and glycine release that modulates post-synaptic activation of NMDA receptors and excitatory glutamatergic transmission. May regulate D-serine release from mesenchymal progenitors located in developing subcutaneous adipose tissue, favoring white adipocyte over thermogenic beige adipocyte lineage commitment. The polypeptide is Asc-type amino acid transporter 1 (SLC7A10) (Homo sapiens (Human)).